Here is an 868-residue protein sequence, read N- to C-terminus: Muscle, skeletal receptor tyrosine protein kinase (868 aa).

Residues 1 to 21 (MRELVNIPLLQMLTLVAFSGT) form the signal peptide. Topologically, residues 22–494 (EKLPKAPVIT…FAVSPAYSMT (473 aa)) are extracellular. Ig-like domains lie at 28–116 (PVIT…GALQ), 121–205 (PKIT…KLVK), and 212–302 (ARIL…ATVS). Intrachain disulfides connect cysteine 49–cysteine 99, cysteine 98–cysteine 112, and cysteine 142–cysteine 190. N-linked (GlcNAc...) asparagine glycosylation is present at asparagine 222. Intrachain disulfides connect cysteine 233/cysteine 282, cysteine 317/cysteine 382, cysteine 325/cysteine 375, cysteine 366/cysteine 406, cysteine 394/cysteine 447, and cysteine 398/cysteine 434. In terms of domain architecture, FZ spans 312–450 (ESKGYCAQYR…HQDPTACTRL (139 aa)). Asparagine 338 is a glycosylation site (N-linked (GlcNAc...) asparagine). An N-linked (GlcNAc...) asparagine glycan is attached at asparagine 459. The chain crosses the membrane as a helical span at residues 495 to 515 (VIISIMSCFAVFALLTITTLY). Topologically, residues 516–868 (CCRRRREWKN…CERAEGTVGV (353 aa)) are cytoplasmic. A Phosphotyrosine; by autocatalysis modification is found at tyrosine 553. Residues 574 to 855 (IEYVRDIGEG…PSFCSIHRIL (282 aa)) enclose the Protein kinase domain. Residues 580–588 (IGEGAFGRV) and lysine 608 contribute to the ATP site. Phosphoserine; by CK2 is present on residues serine 680 and serine 697. The Proton acceptor role is filled by aspartate 724. Position 754 is a phosphotyrosine; by autocatalysis (tyrosine 754).

It belongs to the protein kinase superfamily. Tyr protein kinase family. In terms of assembly, monomer. Homodimer. Interacts with LRP4; the heterodimer forms an AGRIN receptor complex that binds AGRIN resulting in activation of MUSK. Forms a heterotetramer composed of 2 DOK7 and 2 MUSK molecules which facilitates MUSK trans-autophosphorylation on tyrosine residue and activation. Interacts (via cytoplasmic part) with DOK7 (via IRS-type PTB domain); requires MUSK phosphorylation. Interacts with DVL1 (via DEP domain); the interaction is direct and mediates the formation of a DVL1, MUSK and PAK1 ternary complex involved in AChR clustering. Interacts with PDZRN3; this interaction is enhanced by agrin. Interacts with FNTA; the interaction is direct and mediates AGRIN-induced phosphorylation and activation of FNTA. Interacts with CSNK2B; mediates regulation by CK2. Interacts (via the cytoplasmic domain) with DNAJA3. Interacts with NSF; may regulate MUSK endocytosis and activity. Interacts with CAV3; may regulate MUSK signaling. Interacts with RNF31. Interacts with DOK7. It depends on Mg(2+) as a cofactor. Post-translationally, ubiquitinated by PDZRN3. Ubiquitination promotes endocytosis and lysosomal degradation. Phosphorylated. Phosphorylation is induced by AGRIN in a LRP4-dependent manner. Autophosphorylated. Autophosphorylation at Tyr-553 is required for interaction with DOK7 which in turn stimulates the phosphorylation and the activation of MUSK. In terms of processing, neddylated. In terms of tissue distribution, muscle specific.

The protein localises to the postsynaptic cell membrane. It catalyses the reaction L-tyrosyl-[protein] + ATP = O-phospho-L-tyrosyl-[protein] + ADP + H(+). Positively regulated by CK2. Receptor tyrosine kinase which plays a central role in the formation and the maintenance of the neuromuscular junction (NMJ), the synapse between the motor neuron and the skeletal muscle. Recruitment of AGRIN by LRP4 to the MUSK signaling complex induces phosphorylation and activation of MUSK, the kinase of the complex. The activation of MUSK in myotubes regulates the formation of NMJs through the regulation of different processes including the specific expression of genes in subsynaptic nuclei, the reorganization of the actin cytoskeleton and the clustering of the acetylcholine receptors (AChR) in the postsynaptic membrane. May regulate AChR phosphorylation and clustering through activation of ABL1 and Src family kinases which in turn regulate MUSK. DVL1 and PAK1 that form a ternary complex with MUSK are also important for MUSK-dependent regulation of AChR clustering. May positively regulate Rho family GTPases through FNTA. Mediates the phosphorylation of FNTA which promotes prenylation, recruitment to membranes and activation of RAC1 a regulator of the actin cytoskeleton and of gene expression. Other effectors of the MUSK signaling include DNAJA3 which functions downstream of MUSK. May also play a role within the central nervous system by mediating cholinergic responses, synaptic plasticity and memory formation. The protein is Muscle, skeletal receptor tyrosine protein kinase (Musk) of Rattus norvegicus (Rat).